A 354-amino-acid chain; its full sequence is 3-isopropylmalate dehydrogenase (354 aa).

Residue 76-87 coordinates NAD(+); sequence GPRWDGAKERPE. Substrate-binding residues include R94, R104, R130, and D215. Positions 215, 239, and 243 each coordinate Mg(2+). 273-285 serves as a coordination point for NAD(+); it reads GSAPDIAGKNKAN.

This sequence belongs to the isocitrate and isopropylmalate dehydrogenases family. LeuB type 1 subfamily. As to quaternary structure, homodimer. Mg(2+) serves as cofactor. Requires Mn(2+) as cofactor.

The protein localises to the cytoplasm. It carries out the reaction (2R,3S)-3-isopropylmalate + NAD(+) = 4-methyl-2-oxopentanoate + CO2 + NADH. Its pathway is amino-acid biosynthesis; L-leucine biosynthesis; L-leucine from 3-methyl-2-oxobutanoate: step 3/4. Functionally, catalyzes the oxidation of 3-carboxy-2-hydroxy-4-methylpentanoate (3-isopropylmalate) to 3-carboxy-4-methyl-2-oxopentanoate. The product decarboxylates to 4-methyl-2 oxopentanoate. The sequence is that of 3-isopropylmalate dehydrogenase from Bacillus thuringiensis subsp. konkukian (strain 97-27).